A 460-amino-acid polypeptide reads, in one-letter code: Kynureninase (460 aa).

Pyridoxal 5'-phosphate-binding positions include L127, T128, 165–168, D249, H252, and Y274; that span reads FPSD. K275 is subject to N6-(pyridoxal phosphate)lysine. Pyridoxal 5'-phosphate is bound by residues W304 and N332.

This sequence belongs to the kynureninase family. In terms of assembly, homodimer. Requires pyridoxal 5'-phosphate as cofactor.

It localises to the cytoplasm. It carries out the reaction L-kynurenine + H2O = anthranilate + L-alanine + H(+). It catalyses the reaction 3-hydroxy-L-kynurenine + H2O = 3-hydroxyanthranilate + L-alanine + H(+). Its pathway is amino-acid degradation; L-kynurenine degradation; L-alanine and anthranilate from L-kynurenine: step 1/1. It functions in the pathway cofactor biosynthesis; NAD(+) biosynthesis; quinolinate from L-kynurenine: step 2/3. Catalyzes the cleavage of L-kynurenine (L-Kyn) and L-3-hydroxykynurenine (L-3OHKyn) into anthranilic acid (AA) and 3-hydroxyanthranilic acid (3-OHAA), respectively. The sequence is that of Kynureninase from Monosiga brevicollis (Choanoflagellate).